The following is a 146-amino-acid chain: Hemoglobin subunit beta (146 aa).

At V1 the chain carries N-acetylvaline. Residues 2–146 enclose the Globin domain; the sequence is HLTPDEKNAV…VANALAHKYH (145 aa). T12 is modified (phosphothreonine). S44 is subject to Phosphoserine. Residue K59 is modified to N6-acetyllysine. H63 lines the heme b pocket. K82 carries the post-translational modification N6-acetyllysine. H92 contacts heme b. C93 is modified (S-nitrosocysteine). K144 is subject to N6-acetyllysine.

It belongs to the globin family. As to quaternary structure, heterotetramer of two alpha chains and two beta chains. Red blood cells.

Involved in oxygen transport from the lung to the various peripheral tissues. This chain is Hemoglobin subunit beta (HBB), found in Piliocolobus badius (Western red colobus).